The chain runs to 414 residues: Cytochrome b (414 aa).

The next 2 membrane-spanning stretches (helical) occupy residues 40 to 60 (FFGSLAILTLVIQIVTGVWLA) and 84 to 104 (GWLIRYMHSTGASMFFIVIYL). Histidine 91 and histidine 105 together coordinate heme b. A run of 8 helical transmembrane segments spans residues 121–141 (LLWMIGVVIYLVMMATAFFGY), 154–174 (QVIVNLFAAVPVVGEDLSVWV), 188–208 (FFAFHFLLPFLLAGLVFLHIV), 252–272 (LMGVVVFLAIFGYVMFFNPTM), 294–314 (IAPVWYFTPFYAMLRAVPPMY), 317–337 (QFPGVVVMFAAILILFVLPWL), 351–371 (IFKWATGIFVVSFVALAWLGI), and 378–398 (YTLLSQIFTVLYFAYFLLMPI). Residues histidine 192 and histidine 206 each contribute to the heme b site.

The protein belongs to the cytochrome b family. As to quaternary structure, the main subunits of complex b-c1 are: cytochrome b, cytochrome c1 and the Rieske protein. It depends on heme b as a cofactor.

The protein resides in the cell membrane. Functionally, component of the ubiquinol-cytochrome c reductase complex (complex III or cytochrome b-c1 complex), which is a respiratory chain that generates an electrochemical potential coupled to ATP synthesis. The sequence is that of Cytochrome b (petB) from Allochromatium vinosum (strain ATCC 17899 / DSM 180 / NBRC 103801 / NCIMB 10441 / D) (Chromatium vinosum).